Here is a 358-residue protein sequence, read N- to C-terminus: Phosphoserine aminotransferase (358 aa).

Residue arginine 41 coordinates L-glutamate. Pyridoxal 5'-phosphate is bound by residues 75–76 (AS), tryptophan 100, threonine 148, aspartate 167, and glutamine 190. The residue at position 191 (lysine 191) is an N6-(pyridoxal phosphate)lysine. 233–234 (NT) provides a ligand contact to pyridoxal 5'-phosphate.

Belongs to the class-V pyridoxal-phosphate-dependent aminotransferase family. SerC subfamily. In terms of assembly, homodimer. Requires pyridoxal 5'-phosphate as cofactor.

Its subcellular location is the cytoplasm. The enzyme catalyses O-phospho-L-serine + 2-oxoglutarate = 3-phosphooxypyruvate + L-glutamate. It carries out the reaction 4-(phosphooxy)-L-threonine + 2-oxoglutarate = (R)-3-hydroxy-2-oxo-4-phosphooxybutanoate + L-glutamate. It functions in the pathway amino-acid biosynthesis; L-serine biosynthesis; L-serine from 3-phospho-D-glycerate: step 2/3. Its pathway is cofactor biosynthesis; pyridoxine 5'-phosphate biosynthesis; pyridoxine 5'-phosphate from D-erythrose 4-phosphate: step 3/5. Its function is as follows. Catalyzes the reversible conversion of 3-phosphohydroxypyruvate to phosphoserine and of 3-hydroxy-2-oxo-4-phosphonooxybutanoate to phosphohydroxythreonine. This is Phosphoserine aminotransferase from Campylobacter jejuni subsp. jejuni serotype O:23/36 (strain 81-176).